Here is a 390-residue protein sequence, read N- to C-terminus: Small ribosomal subunit protein uS9m (390 aa).

Positions Pro368–Arg390 are disordered.

This sequence belongs to the universal ribosomal protein uS9 family. As to quaternary structure, component of the mitochondrial ribosome small subunit (28S) which comprises a 12S rRNA and about 30 distinct proteins.

It localises to the mitochondrion. The polypeptide is Small ribosomal subunit protein uS9m (Mrps9) (Mus musculus (Mouse)).